Here is a 272-residue protein sequence, read N- to C-terminus: Shikimate dehydrogenase (NADP(+)) (272 aa).

Residues 14–16 and Thr61 contribute to the shikimate site; that span reads SKS. Lys65 serves as the catalytic Proton acceptor. Residue Glu77 participates in NADP(+) binding. Shikimate-binding residues include Asn86 and Asp102. NADP(+) contacts are provided by residues 126-130, 149-154, and Met212; these read GAGGA and NRTADK. Tyr214 contacts shikimate. Gly237 lines the NADP(+) pocket.

Belongs to the shikimate dehydrogenase family. Homodimer.

It catalyses the reaction shikimate + NADP(+) = 3-dehydroshikimate + NADPH + H(+). It functions in the pathway metabolic intermediate biosynthesis; chorismate biosynthesis; chorismate from D-erythrose 4-phosphate and phosphoenolpyruvate: step 4/7. In terms of biological role, involved in the biosynthesis of the chorismate, which leads to the biosynthesis of aromatic amino acids. Catalyzes the reversible NADPH linked reduction of 3-dehydroshikimate (DHSA) to yield shikimate (SA). This is Shikimate dehydrogenase (NADP(+)) from Glaesserella parasuis serovar 5 (strain SH0165) (Haemophilus parasuis).